An 88-amino-acid chain; its full sequence is Kunitz-type serine protease inhibitor taicotoxin (88 aa).

The N-terminal stretch at 1–24 (MSSGGLLLLLGLLTLWEVLTPVSS) is a signal peptide. Positions 31–81 (CHLPPKPGPCRAAIPRFYYNPHSKQCEKFIYGGCHGNANSFKTPDECNYTC) constitute a BPTI/Kunitz inhibitor domain. Intrachain disulfides connect Cys-31–Cys-81, Cys-40–Cys-64, and Cys-56–Cys-77. Positions 87-88 (PK) are excised as a propeptide.

This sequence belongs to the venom Kunitz-type family. As to quaternary structure, heterotrimer composed of an alpha-neurotoxin-like peptide of 8 kDa (AC P0CJ35), a neurotoxic phospholipase of 16 kDa (AC Q7LZG2) and this serine protease inhibitor of 7 kDa at an approximate stoichiometry of 1:1:4; non-covalently linked. Expressed by the venom gland.

The protein localises to the secreted. In terms of biological role, heterotrimer: blocks the voltage-dependent L-type calcium channels (Cav) from the heart, and the small conductance calcium-activated potassium channels (KCa) in the chromaffin cells and in the brain. Is very toxic to mice. Functionally, monomer: serine protease inhibitor that inhibits plasma kallikrein (Ki=0.057 nM), tissue kallikrein (Ki=0.23 nM), trypsin (Ki=0.31 nM), plasmin (Ki=6.1 nM), elastase (Ki=201 nM), factor Xa (Ki=871 nM), alpha-factor XIIa (Ki=2380 nM). Does not inhibit APC, urokinase-type plasminogen activator (uPA/PLAU), tissue plasminogen activator (tPA/PLAT), thrombin and factor VIIa. In addition, the monomer inhibits fibrinolysis in whole blood and prolonged the intrinsec clotting time. In Oxyuranus scutellatus scutellatus (Australian taipan), this protein is Kunitz-type serine protease inhibitor taicotoxin.